Reading from the N-terminus, the 310-residue chain is Methionyl-tRNA formyltransferase (310 aa).

109–112 (SLLP) provides a ligand contact to (6S)-5,6,7,8-tetrahydrofolate.

Belongs to the Fmt family.

The catalysed reaction is L-methionyl-tRNA(fMet) + (6R)-10-formyltetrahydrofolate = N-formyl-L-methionyl-tRNA(fMet) + (6S)-5,6,7,8-tetrahydrofolate + H(+). In terms of biological role, attaches a formyl group to the free amino group of methionyl-tRNA(fMet). The formyl group appears to play a dual role in the initiator identity of N-formylmethionyl-tRNA by promoting its recognition by IF2 and preventing the misappropriation of this tRNA by the elongation apparatus. The polypeptide is Methionyl-tRNA formyltransferase (Pseudomonas putida (strain ATCC 47054 / DSM 6125 / CFBP 8728 / NCIMB 11950 / KT2440)).